The following is a 584-amino-acid chain: Phosphoinositide phospholipase C 7 (584 aa).

An EF-hand-like domain is found at 26–102; sequence EIKTLFDNYS…NSPLSSLEVH (77 aa). Residues 103 to 248 enclose the PI-PLC X-box domain; sequence QDMDAPLSHY…LKKRIMISTK (146 aa). Active-site residues include His-118 and His-164. Residues 285–318 form a disordered region; that stretch reads DRSVDKNDSNGDDDDDDDDDDDDDDGDDKIKKNA. Ser-287 carries the phosphoserine modification. Acidic residues predominate over residues 294–311; it reads NGDDDDDDDDDDDDDDGD. The region spanning 323-439 is the PI-PLC Y-box domain; that stretch reads KHLIAIEAGK…GYIKKPDLLL (117 aa). The region spanning 433–566 is the C2 domain; the sequence is KKPDLLLKSN…QGIRAVPLRN (134 aa).

The cofactor is Ca(2+). Expressed in leaves, roots, flowers and siliques.

It localises to the cell membrane. It catalyses the reaction a 1,2-diacyl-sn-glycero-3-phospho-(1D-myo-inositol-4,5-bisphosphate) + H2O = 1D-myo-inositol 1,4,5-trisphosphate + a 1,2-diacyl-sn-glycerol + H(+). In terms of biological role, the production of the second messenger molecules diacylglycerol (DAG) and inositol 1,4,5-trisphosphate (IP3) is mediated by activated phosphatidylinositol-specific phospholipase C enzymes. The polypeptide is Phosphoinositide phospholipase C 7 (PLC7) (Arabidopsis thaliana (Mouse-ear cress)).